The chain runs to 78 residues: Structural DNA-binding protein p10 (78 aa).

Low complexity predominate over residues Met1–Gly27. Positions Met1–Gly41 are disordered.

This sequence belongs to the asfivirus P10 family.

Its subcellular location is the virion. In terms of biological role, may play a role in genome packaging through direct interaction with viral DNA. Binds to ssDNA and dsDNA with the same apparent affinity in vitro. This chain is Structural DNA-binding protein p10, found in African swine fever virus (strain Badajoz 1971 Vero-adapted) (Ba71V).